Consider the following 310-residue polypeptide: Zinc finger CCCH domain-containing protein 14 (310 aa).

The segment at 56-75 (ESLSPSPPSSSSPPSRVDTT) is disordered. The stretch at 84–129 (KLILEYDELNEHYELCLNRLQSLMTELDSLRHENDSLRFENSDLLK) forms a coiled coil. Basic and acidic residues predominate over residues 155 to 167 (QISDSRSAKRNNQ). The disordered stretch occupies residues 155–174 (QISDSRSAKRNNQERNSLPK). 2 C3H1-type zinc fingers span residues 232-260 (MMKT…HGID) and 270-298 (RYKT…HSLT).

In terms of tissue distribution, highly expressed in secondary cell wall-forming tissues and the xylem cells of roots. Expressed predominantly in inflorescence stems, flowers and siliques. Highly expressed in the basal portion of stems, where cells are undergoing secondary cell wall thickening.

In terms of biological role, functions probably as a transcriptional factor that activates genes involved in secondary cell wall biosynthesis. May play a role in both transcriptional and post-transcriptional regulation. Binds to ssDNA, dsDNA, and ribohomopolymers in vitro. Maybe involved in post-transcriptional regulation of its target genes. Targets RNA of a polygalacturonase, a well-known cell wall modifying gene. Functions redudantly with C3H15 to regulate secondary cell wall formation. C3H14 and C3H15 have overlapping roles in the regulation of secondary cell wall formation and anther development. C3H14 may contribute more to secondary cell wall thickening while C3H15 could be more important in anther development. May regulate at both the transcriptional and post-transcriptional levels the expression of many genes involved in various biological processes, particularly those associated with cell wall metabolism and pollen development. This chain is Zinc finger CCCH domain-containing protein 14, found in Arabidopsis thaliana (Mouse-ear cress).